The following is a 187-amino-acid chain: Oligoribonuclease (187 aa).

The 164-residue stretch at 7–170 folds into the Exonuclease domain; that stretch reads LCWLDMEMTG…DDILESIEEM (164 aa). Residue Y128 is part of the active site.

This sequence belongs to the oligoribonuclease family.

It localises to the cytoplasm. Its function is as follows. 3'-to-5' exoribonuclease specific for small oligoribonucleotides. The sequence is that of Oligoribonuclease from Neisseria meningitidis serogroup A / serotype 4A (strain DSM 15465 / Z2491).